The chain runs to 44 residues: Photosystem I reaction center subunit IX (44 aa).

The chain crosses the membrane as a helical span at residues 9–29 (FIRSAPVVAAVWLSLTAGIII).

This sequence belongs to the PsaJ family.

The protein localises to the cellular thylakoid membrane. In terms of biological role, may help in the organization of the PsaE and PsaF subunits. The chain is Photosystem I reaction center subunit IX from Prochlorococcus marinus subsp. pastoris (strain CCMP1986 / NIES-2087 / MED4).